Consider the following 374-residue polypeptide: N5-carboxyaminoimidazole ribonucleotide synthase (374 aa).

ATP is bound by residues R108, K148, G153–Q159, E183–L186, E191, H214, and N266–E267. The 185-residue stretch at K112–T296 folds into the ATP-grasp domain.

The protein belongs to the PurK/PurT family. In terms of assembly, homodimer.

It carries out the reaction 5-amino-1-(5-phospho-beta-D-ribosyl)imidazole + hydrogencarbonate + ATP = 5-carboxyamino-1-(5-phospho-D-ribosyl)imidazole + ADP + phosphate + 2 H(+). It participates in purine metabolism; IMP biosynthesis via de novo pathway; 5-amino-1-(5-phospho-D-ribosyl)imidazole-4-carboxylate from 5-amino-1-(5-phospho-D-ribosyl)imidazole (N5-CAIR route): step 1/2. Catalyzes the ATP-dependent conversion of 5-aminoimidazole ribonucleotide (AIR) and HCO(3)(-) to N5-carboxyaminoimidazole ribonucleotide (N5-CAIR). The protein is N5-carboxyaminoimidazole ribonucleotide synthase of Staphylococcus aureus (strain Mu50 / ATCC 700699).